Consider the following 509-residue polypeptide: Methylthioalkylmalate synthase 1-1, chloroplastic (509 aa).

The N-terminal 55 residues, methionine 1 to tyrosine 55, are a transit peptide targeting the chloroplast. Positions valine 91–methionine 365 constitute a Pyruvate carboxyltransferase domain. Positions 100, 298, and 300 each coordinate Mn(2+).

Belongs to the alpha-IPM synthase/homocitrate synthase family. Monomer. Mn(2+) serves as cofactor. It depends on Co(2+) as a cofactor.

The protein resides in the plastid. The protein localises to the chloroplast. The catalysed reaction is 4-methylsulfanyl-2-oxobutanoate + acetyl-CoA + H2O = 2-(2-methylsulfanyl)ethylmalate + CoA + H(+). It participates in secondary metabolite biosynthesis. Inhibited by EDTA, Cu(2+) and Zn(2+). Its function is as follows. Determines the side chain length of aliphatic glucosinolate structures. Involved in the biosynthesis of glucosinolate derivative natural products such as 6-(methylsulfinyl)hexylisothiocyanate (6-MSITC), a compound found in wasabi with diverse health-promoting properties. Catalyzes the conversion of 4-methylsulfanyl-2-oxobutanoate (4-MTOB) into 2-(2-methylsulfanyl)ethylmalate (2-(2-MT)EM). The chain is Methylthioalkylmalate synthase 1-1, chloroplastic from Eutrema japonicum (Wasabi plant).